The following is a 564-amino-acid chain: Septation ring formation regulator EzrA (564 aa).

The Extracellular segment spans residues 1 to 2 (ME). Residues 3–21 (FVIGLLALFLILFATGYLF) form a helical membrane-spanning segment. The Cytoplasmic segment spans residues 22–564 (RKNIYKEIDR…RLEADAKQPE (543 aa)). Coiled coils occupy residues 99-159 (QKSK…AYSH), 243-281 (KGYK…EAAA), and 310-498 (KVPE…VELV).

It belongs to the EzrA family.

The protein resides in the cell membrane. Its function is as follows. Negative regulator of FtsZ ring formation; modulates the frequency and position of FtsZ ring formation. Inhibits FtsZ ring formation at polar sites. Interacts either with FtsZ or with one of its binding partners to promote depolymerization. In Bacillus licheniformis (strain ATCC 14580 / DSM 13 / JCM 2505 / CCUG 7422 / NBRC 12200 / NCIMB 9375 / NCTC 10341 / NRRL NRS-1264 / Gibson 46), this protein is Septation ring formation regulator EzrA.